The primary structure comprises 219 residues: MOB kinase activator-like 1 (219 aa).

4 residues coordinate Zn(2+): C79, C84, H161, and H166.

The protein belongs to the MOB1/phocein family. In terms of assembly, interacts with and activates trc and wts. Phosphorylated by wts/mats kinase complex. Activated by phosphorylation by Hippo (Hpo) kinase which increases its affinity and its ability to activate Warts (Wts) kinase. Ubiquitously expressed at low levels in developing tissues (at protein level).

The protein localises to the cytoplasm. It is found in the cytoskeleton. It localises to the microtubule organizing center. Its subcellular location is the centrosome. The protein resides in the nucleus. The protein localises to the cytosol. It is found in the cell membrane. In terms of biological role, coactivator of Warts (Wts) kinase in the Hippo/SWH (Sav/Wts/Hpo)signaling pathway, a signaling pathway that plays a pivotal role in organ size control and tumor suppression by restricting proliferation and promoting apoptosis. The core of this pathway is composed of a kinase cascade wherein Hippo (Hpo), in complex with its regulatory protein Salvador (Sav), phosphorylates and activates Warts (Wts) in complex with its regulatory protein Mats, which in turn phosphorylates and inactivates the Yorkie (Yki)oncoprotein. The Hippo/SWH signaling pathway inhibits the activity of the transcriptional complex formed by Scalloped (sd) and Yki and the target genes of this pathway include cyclin-E (cycE), diap1 and bantam. Mats is essential for early development and is required for proper chromosomal segregation in developing embryos. In Drosophila melanogaster (Fruit fly), this protein is MOB kinase activator-like 1.